Consider the following 196-residue polypeptide: Cytochrome c biogenesis ATP-binding export protein CcmA (196 aa).

Residues 2-195 form the ABC transporter domain; sequence LSFHQLKFNI…HIKSAQILQL (194 aa). ATP is bound at residue 34-41; it reads GANGCGKT.

The protein belongs to the ABC transporter superfamily. CcmA exporter (TC 3.A.1.107) family. The complex is composed of two ATP-binding proteins (CcmA) and two transmembrane proteins (CcmB).

The protein resides in the cell inner membrane. The catalysed reaction is heme b(in) + ATP + H2O = heme b(out) + ADP + phosphate + H(+). Its function is as follows. Part of the ABC transporter complex CcmAB involved in the biogenesis of c-type cytochromes; once thought to export heme, this seems not to be the case, but its exact role is uncertain. Responsible for energy coupling to the transport system. The sequence is that of Cytochrome c biogenesis ATP-binding export protein CcmA from Rickettsia bellii (strain RML369-C).